A 158-amino-acid chain; its full sequence is Ankyrin repeat domain-containing protein 37 (158 aa).

ANK repeat units follow at residues 1–25 (MLLLDCNPEVDSLKHLLETGASVNA), 30–59 (CEQSPVHLAAGGGLACFLLWQLQTGADLNQ), and 63–92 (FGEAPLHKAARVGSMECLSLLVASDAQIDL). A Nuclear localization signal motif is present at residues 129–149 (EQPNKDHCVQVLRLKRSFGSE).

In terms of processing, ubiquitinated by the CRL2(FEM1B) complex, leading to its degradation.

The protein resides in the nucleus. Its subcellular location is the cytoplasm. This is Ankyrin repeat domain-containing protein 37 (ANKRD37) from Bos taurus (Bovine).